We begin with the raw amino-acid sequence, 196 residues long: Pyridoxal 5'-phosphate synthase subunit PdxT (196 aa).

Residue 46–48 (GES) coordinates L-glutamine. Cysteine 78 functions as the Nucleophile in the catalytic mechanism. Residues arginine 110 and 138–139 (IR) each bind L-glutamine. Active-site charge relay system residues include histidine 174 and glutamate 176.

Belongs to the glutaminase PdxT/SNO family. In terms of assembly, in the presence of PdxS, forms a dodecamer of heterodimers. Only shows activity in the heterodimer.

It catalyses the reaction aldehydo-D-ribose 5-phosphate + D-glyceraldehyde 3-phosphate + L-glutamine = pyridoxal 5'-phosphate + L-glutamate + phosphate + 3 H2O + H(+). The catalysed reaction is L-glutamine + H2O = L-glutamate + NH4(+). The protein operates within cofactor biosynthesis; pyridoxal 5'-phosphate biosynthesis. Its function is as follows. Catalyzes the hydrolysis of glutamine to glutamate and ammonia as part of the biosynthesis of pyridoxal 5'-phosphate. The resulting ammonia molecule is channeled to the active site of PdxS. The protein is Pyridoxal 5'-phosphate synthase subunit PdxT of Deinococcus radiodurans (strain ATCC 13939 / DSM 20539 / JCM 16871 / CCUG 27074 / LMG 4051 / NBRC 15346 / NCIMB 9279 / VKM B-1422 / R1).